The chain runs to 268 residues: MSHAPFIAVIPARLASTRLPNKPLADIDGKPMVVRVAERAHQSSAARVVVATDAASVADACMQHHVEAVLTRADHASGTDRLAEVATVLGLPDDAIVVNVQGDEPLIAPTLIDNVAAHLRDHPDCAIATAAHPIHDPADVFNPNVVKVVLDAADRALLFSRAPLPWARDTWTPAVMAGSVAERPLPAMPVLRHIGIYAYRAGFLRRFPQLAAAPIEQTEQLEQLRAMWHGERIAVLTTDDAPAAGVDTPEDLTRVRAAWAELLAQDGP.

This sequence belongs to the KdsB family.

It localises to the cytoplasm. It catalyses the reaction 3-deoxy-alpha-D-manno-oct-2-ulosonate + CTP = CMP-3-deoxy-beta-D-manno-octulosonate + diphosphate. It functions in the pathway nucleotide-sugar biosynthesis; CMP-3-deoxy-D-manno-octulosonate biosynthesis; CMP-3-deoxy-D-manno-octulosonate from 3-deoxy-D-manno-octulosonate and CTP: step 1/1. It participates in bacterial outer membrane biogenesis; lipopolysaccharide biosynthesis. Its function is as follows. Activates KDO (a required 8-carbon sugar) for incorporation into bacterial lipopolysaccharide in Gram-negative bacteria. This is 3-deoxy-manno-octulosonate cytidylyltransferase from Ralstonia pickettii (strain 12J).